We begin with the raw amino-acid sequence, 147 residues long: Large ribosomal subunit protein uL16 (147 aa).

The protein belongs to the universal ribosomal protein uL16 family. As to quaternary structure, part of the 50S ribosomal subunit.

Its function is as follows. Binds 23S rRNA and is also seen to make contacts with the A and possibly P site tRNAs. This chain is Large ribosomal subunit protein uL16, found in Clostridium acetobutylicum (strain ATCC 824 / DSM 792 / JCM 1419 / IAM 19013 / LMG 5710 / NBRC 13948 / NRRL B-527 / VKM B-1787 / 2291 / W).